We begin with the raw amino-acid sequence, 467 residues long: ATP synthase subunit beta 1 (467 aa).

Residue 150 to 157 coordinates ATP; that stretch reads GGAGVGKT.

This sequence belongs to the ATPase alpha/beta chains family. As to quaternary structure, F-type ATPases have 2 components, CF(1) - the catalytic core - and CF(0) - the membrane proton channel. CF(1) has five subunits: alpha(3), beta(3), gamma(1), delta(1), epsilon(1). CF(0) has three main subunits: a(1), b(2) and c(9-12). The alpha and beta chains form an alternating ring which encloses part of the gamma chain. CF(1) is attached to CF(0) by a central stalk formed by the gamma and epsilon chains, while a peripheral stalk is formed by the delta and b chains.

The protein resides in the cell inner membrane. The enzyme catalyses ATP + H2O + 4 H(+)(in) = ADP + phosphate + 5 H(+)(out). Functionally, produces ATP from ADP in the presence of a proton gradient across the membrane. The catalytic sites are hosted primarily by the beta subunits. In Vibrio campbellii (strain ATCC BAA-1116), this protein is ATP synthase subunit beta 1.